The chain runs to 258 residues: L-aspartate dehydrogenase 1 (258 aa).

NAD(+) is bound by residues Ala-121 and Asn-181. The active site involves His-211.

This sequence belongs to the L-aspartate dehydrogenase family.

It carries out the reaction L-aspartate + NADP(+) + H2O = oxaloacetate + NH4(+) + NADPH + H(+). It catalyses the reaction L-aspartate + NAD(+) + H2O = oxaloacetate + NH4(+) + NADH + H(+). It functions in the pathway cofactor biosynthesis; NAD(+) biosynthesis; iminoaspartate from L-aspartate (dehydrogenase route): step 1/1. Its function is as follows. Specifically catalyzes the NAD or NADP-dependent dehydrogenation of L-aspartate to iminoaspartate. The chain is L-aspartate dehydrogenase 1 from Bordetella bronchiseptica (strain ATCC BAA-588 / NCTC 13252 / RB50) (Alcaligenes bronchisepticus).